The following is a 374-amino-acid chain: Putative phosphoserine aminotransferase (374 aa).

Arg48 serves as a coordination point for L-glutamate. Pyridoxal 5'-phosphate-binding positions include 82-83 (AT), Phe106, Thr152, Asp174, and Gln197. Residue Lys198 is modified to N6-(pyridoxal phosphate)lysine. Position 249-250 (249-250 (NT)) interacts with pyridoxal 5'-phosphate.

It belongs to the class-V pyridoxal-phosphate-dependent aminotransferase family. SerC subfamily. Homodimer. Pyridoxal 5'-phosphate is required as a cofactor.

The protein resides in the cytoplasm. The enzyme catalyses O-phospho-L-serine + 2-oxoglutarate = 3-phosphooxypyruvate + L-glutamate. The catalysed reaction is 4-(phosphooxy)-L-threonine + 2-oxoglutarate = (R)-3-hydroxy-2-oxo-4-phosphooxybutanoate + L-glutamate. It participates in amino-acid biosynthesis; L-serine biosynthesis; L-serine from 3-phospho-D-glycerate: step 2/3. The protein operates within cofactor biosynthesis; pyridoxine 5'-phosphate biosynthesis; pyridoxine 5'-phosphate from D-erythrose 4-phosphate: step 3/5. Its function is as follows. Catalyzes the reversible conversion of 3-phosphohydroxypyruvate to phosphoserine and of 3-hydroxy-2-oxo-4-phosphonooxybutanoate to phosphohydroxythreonine. This Mycolicibacterium paratuberculosis (strain ATCC BAA-968 / K-10) (Mycobacterium paratuberculosis) protein is Putative phosphoserine aminotransferase.